The following is a 138-amino-acid chain: Putative nickel-responsive regulator (138 aa).

Ni(2+)-binding residues include His-78, His-89, His-91, and Cys-97.

This sequence belongs to the transcriptional regulatory CopG/NikR family. Ni(2+) is required as a cofactor.

Transcriptional regulator. In Desulfovibrio desulfuricans (strain ATCC 27774 / DSM 6949 / MB), this protein is Putative nickel-responsive regulator.